The chain runs to 2226 residues: Rotatin (2226 aa).

The disordered stretch occupies residues 295-345 (ARGTHHSQNPSPGSSSPRPSVVGRTGQRPRGDGQDWDAASSSGSSSHAHVN). Low complexity-rich tracts occupy residues 304–318 (PSPG…VVGR) and 332–343 (AASSSGSSSHAH). Phosphoserine is present on serine 310. Residue lysine 811 is modified to N6-acetyllysine. The interval 1534 to 1554 (SRTSQDRDPSSLSTSETTVAP) is disordered. The span at 1543–1554 (SSLSTSETTVAP) shows a compositional bias: polar residues.

It belongs to the rotatin family. As to quaternary structure, interacts with PPP1R35; this interaction allows the mutual recruitment to the centriole.

Its subcellular location is the cytoplasm. The protein resides in the cytoskeleton. It localises to the cilium basal body. It is found in the microtubule organizing center. The protein localises to the centrosome. Its function is as follows. Involved in the genetic cascade that governs left-right specification. Plays a role in the maintenance of a normal ciliary structure. Required for correct asymmetric expression of NODAL, LEFTY and PITX2. The chain is Rotatin from Homo sapiens (Human).